Reading from the N-terminus, the 409-residue chain is Arginine biosynthesis bifunctional protein ArgJ (409 aa).

Positions 156, 182, 193, 280, 404, and 409 each coordinate substrate. Catalysis depends on Thr193, which acts as the Nucleophile.

This sequence belongs to the ArgJ family. Heterotetramer of two alpha and two beta chains.

The protein localises to the cytoplasm. It carries out the reaction N(2)-acetyl-L-ornithine + L-glutamate = N-acetyl-L-glutamate + L-ornithine. The catalysed reaction is L-glutamate + acetyl-CoA = N-acetyl-L-glutamate + CoA + H(+). It participates in amino-acid biosynthesis; L-arginine biosynthesis; L-ornithine and N-acetyl-L-glutamate from L-glutamate and N(2)-acetyl-L-ornithine (cyclic): step 1/1. It functions in the pathway amino-acid biosynthesis; L-arginine biosynthesis; N(2)-acetyl-L-ornithine from L-glutamate: step 1/4. In terms of biological role, catalyzes two activities which are involved in the cyclic version of arginine biosynthesis: the synthesis of N-acetylglutamate from glutamate and acetyl-CoA as the acetyl donor, and of ornithine by transacetylation between N(2)-acetylornithine and glutamate. The polypeptide is Arginine biosynthesis bifunctional protein ArgJ (Ralstonia nicotianae (strain ATCC BAA-1114 / GMI1000) (Ralstonia solanacearum)).